The primary structure comprises 466 residues: Asparagine--tRNA ligase (466 aa).

The protein belongs to the class-II aminoacyl-tRNA synthetase family. As to quaternary structure, homodimer.

It localises to the cytoplasm. The enzyme catalyses tRNA(Asn) + L-asparagine + ATP = L-asparaginyl-tRNA(Asn) + AMP + diphosphate + H(+). This chain is Asparagine--tRNA ligase, found in Shewanella oneidensis (strain ATCC 700550 / JCM 31522 / CIP 106686 / LMG 19005 / NCIMB 14063 / MR-1).